Reading from the N-terminus, the 265-residue chain is Ribosomal RNA small subunit methyltransferase A (265 aa).

S-adenosyl-L-methionine contacts are provided by His13, Leu15, Gly40, Glu61, Asp85, and Asn103.

This sequence belongs to the class I-like SAM-binding methyltransferase superfamily. rRNA adenine N(6)-methyltransferase family. RsmA subfamily.

The protein localises to the cytoplasm. It carries out the reaction adenosine(1518)/adenosine(1519) in 16S rRNA + 4 S-adenosyl-L-methionine = N(6)-dimethyladenosine(1518)/N(6)-dimethyladenosine(1519) in 16S rRNA + 4 S-adenosyl-L-homocysteine + 4 H(+). Functionally, specifically dimethylates two adjacent adenosines (A1518 and A1519) in the loop of a conserved hairpin near the 3'-end of 16S rRNA in the 30S particle. May play a critical role in biogenesis of 30S subunits. This chain is Ribosomal RNA small subunit methyltransferase A, found in Bordetella pertussis (strain Tohama I / ATCC BAA-589 / NCTC 13251).